Reading from the N-terminus, the 108-residue chain is Putative lipid-binding protein AIR1B (108 aa).

Residues 1–23 form the signal peptide; sequence MAPRTSLALFVSLNLLFFTCTSA. Cystine bridges form between cysteine 28–cysteine 55, cysteine 35–cysteine 54, and cysteine 71–cysteine 107.

Belongs to the plant LTP family. PEARLI1 subfamily.

The protein resides in the secreted. The protein is Putative lipid-binding protein AIR1B (AIR1B) of Arabidopsis thaliana (Mouse-ear cress).